A 106-amino-acid chain; its full sequence is Pyrimidine/purine nucleoside phosphorylase (106 aa).

It belongs to the nucleoside phosphorylase PpnP family.

The enzyme catalyses a purine D-ribonucleoside + phosphate = a purine nucleobase + alpha-D-ribose 1-phosphate. It carries out the reaction adenosine + phosphate = alpha-D-ribose 1-phosphate + adenine. It catalyses the reaction cytidine + phosphate = cytosine + alpha-D-ribose 1-phosphate. The catalysed reaction is guanosine + phosphate = alpha-D-ribose 1-phosphate + guanine. The enzyme catalyses inosine + phosphate = alpha-D-ribose 1-phosphate + hypoxanthine. It carries out the reaction thymidine + phosphate = 2-deoxy-alpha-D-ribose 1-phosphate + thymine. It catalyses the reaction uridine + phosphate = alpha-D-ribose 1-phosphate + uracil. The catalysed reaction is xanthosine + phosphate = alpha-D-ribose 1-phosphate + xanthine. Functionally, catalyzes the phosphorolysis of diverse nucleosides, yielding D-ribose 1-phosphate and the respective free bases. Can use uridine, adenosine, guanosine, cytidine, thymidine, inosine and xanthosine as substrates. Also catalyzes the reverse reactions. The polypeptide is Pyrimidine/purine nucleoside phosphorylase (Burkholderia cenocepacia (strain ATCC BAA-245 / DSM 16553 / LMG 16656 / NCTC 13227 / J2315 / CF5610) (Burkholderia cepacia (strain J2315))).